The chain runs to 450 residues: FTFLDEGFTAKDILDQKINEVSSSDDKDAFYVADLGDIVKKHMRWHKALPRVTPFYAVKCNDSEAVVKTLAVLGAGFDCASKTEIQLVQSIGVPPERIIYANPCKQLSQIKHAANSGVRMMTFDSEVELMKIARPHPKAKLLLRITTDDSKAVCRLSVKFGATLKTSRLLLERAKELDLAIVGVSFHVGSGCTDPETFVQAISDARCVFDMGAELGFNMYLLDIGGGFPGSEDVKLKFEEITSVINPALDKYFPLDSEVTIIAEPGRYYVASAFTLAVNIIAKKIVSKEQTGSDDEDDVNDKTLMYYVNDGVYGSFNCILYDHAHVKPVLQKRPKPDDGCYSCSIWGPTCDGLDRIVERCNMPELQVGDWILFENMGAYTVAAASTFNGFQRPTIHYVMSRPAWQLMQQIKEQEFLAEVEEQDVASLPLSCACESGIEYPATCASASINV.

Position 59 is an N6-(pyridoxal phosphate)lysine (Lys59). Pyridoxal 5'-phosphate is bound by residues Ser190, Gly227, and 264 to 267 (EPGR). Ser293 bears the Phosphoserine; by CK2 mark. 321-322 (YD) is a substrate binding site. Cys350 acts as the Proton donor; shared with dimeric partner in catalysis. Asp351 provides a ligand contact to substrate. Tyr379 is a binding site for pyridoxal 5'-phosphate.

It belongs to the Orn/Lys/Arg decarboxylase class-II family. In terms of assembly, homodimer. Only the dimer is catalytically active, as the active sites are constructed of residues from both monomers. The cofactor is pyridoxal 5'-phosphate.

It catalyses the reaction L-ornithine + H(+) = putrescine + CO2. It functions in the pathway amine and polyamine biosynthesis; putrescine biosynthesis via L-ornithine pathway; putrescine from L-ornithine: step 1/1. Inhibited by antizymes (AZs) in response to polyamine levels. AZs inhibit the assembly of the functional homodimer by binding to ODC monomers and targeting them for ubiquitin-independent proteolytic destruction by the 26S proteasome. In terms of biological role, catalyzes the first and rate-limiting step of polyamine biosynthesis that converts ornithine into putrescine, which is the precursor for the polyamines, spermidine and spermine. Polyamines are essential for cell proliferation and are implicated in cellular processes, ranging from DNA replication to apoptosis. The protein is Ornithine decarboxylase (ODC1) of Gallus gallus (Chicken).